The sequence spans 551 residues: Chaperonin GroEL (551 aa).

ATP-binding positions include 29-32, Lys50, 86-90, Gly417, and Asp499; these read TAGP and DGTTT.

Belongs to the chaperonin (HSP60) family. In terms of assembly, forms a cylinder of 14 subunits composed of two heptameric rings stacked back-to-back. Interacts with the co-chaperonin GroES.

It localises to the cytoplasm. It catalyses the reaction ATP + H2O + a folded polypeptide = ADP + phosphate + an unfolded polypeptide.. Together with its co-chaperonin GroES, plays an essential role in assisting protein folding. The GroEL-GroES system forms a nano-cage that allows encapsulation of the non-native substrate proteins and provides a physical environment optimized to promote and accelerate protein folding. The chain is Chaperonin GroEL from Ehrlichia ruminantium (strain Gardel).